The chain runs to 750 residues: Coiled-coil domain-containing protein 142 (750 aa).

Residues 1-29 (MAQASRSGSLPPLVIVPPLRAQPGGTGEE) form a disordered region. Residues 87–110 (ALQRLRAVLLRLHREREQLLQARD) adopt a coiled-coil conformation. The disordered stretch occupies residues 687–714 (LEPPLQPGTSPAQTGQLQSTLGGRGPSP). Residues 693–707 (PGTSPAQTGQLQSTL) show a composition bias toward polar residues.

The polypeptide is Coiled-coil domain-containing protein 142 (CCDC142) (Homo sapiens (Human)).